Here is a 323-residue protein sequence, read N- to C-terminus: Deaminated glutathione amidase (323 aa).

The transit peptide at 1 to 33 (MLGFITRPPHQLLCTGYRLLRTPVLCTQPRPRT) directs the protein to the mitochondrion. In terms of domain architecture, CN hydrolase spans 42–294 (LPLVAVCQVT…PGLCLARIDL (253 aa)). Glutamate 82 acts as the Proton acceptor in catalysis. The active-site Proton donor is the lysine 157. Cysteine 199 serves as the catalytic Nucleophile.

It belongs to the carbon-nitrogen hydrolase superfamily. NIT1/NIT2 family. Expressed in most tissues with higher expression in adult liver and kidney as well as in fetal adrenal gland and skeletal muscle.

The protein localises to the mitochondrion. It is found in the cytoplasm. It catalyses the reaction N-(4-oxoglutaryl)-L-cysteinylglycine + H2O = L-cysteinylglycine + 2-oxoglutarate. The enzyme catalyses N-(4-carboxy-4-oxobutanoyl)-L-ethylglycylglycine + H2O = N-(2-aminobutanoyl)glycine + 2-oxoglutarate. Functionally, catalyzes the hydrolysis of the amide bond in N-(4-oxoglutarate)-L-cysteinylglycine (deaminated glutathione), a metabolite repair reaction to dispose of the harmful deaminated glutathione. Possesses amidase activity toward deaminated ophthalmate in vitro. Plays a role in cell growth and apoptosis: loss of expression promotes cell growth, resistance to DNA damage stress and increased incidence to NMBA-induced tumors. Has tumor suppressor properties that enhances the apoptotic responsiveness in cancer cells; this effect is additive to the tumor suppressor activity of FHIT. It is also a negative regulator of primary T-cells. This is Deaminated glutathione amidase from Mus musculus (Mouse).